We begin with the raw amino-acid sequence, 272 residues long: Acyl-[acyl-carrier-protein]--UDP-N-acetylglucosamine O-acyltransferase (272 aa).

Belongs to the transferase hexapeptide repeat family. LpxA subfamily. Homotrimer.

It localises to the cytoplasm. It catalyses the reaction a (3R)-hydroxyacyl-[ACP] + UDP-N-acetyl-alpha-D-glucosamine = a UDP-3-O-[(3R)-3-hydroxyacyl]-N-acetyl-alpha-D-glucosamine + holo-[ACP]. The protein operates within glycolipid biosynthesis; lipid IV(A) biosynthesis; lipid IV(A) from (3R)-3-hydroxytetradecanoyl-[acyl-carrier-protein] and UDP-N-acetyl-alpha-D-glucosamine: step 1/6. Involved in the biosynthesis of lipid A, a phosphorylated glycolipid that anchors the lipopolysaccharide to the outer membrane of the cell. This is Acyl-[acyl-carrier-protein]--UDP-N-acetylglucosamine O-acyltransferase from Methylobacterium radiotolerans (strain ATCC 27329 / DSM 1819 / JCM 2831 / NBRC 15690 / NCIMB 10815 / 0-1).